A 177-amino-acid polypeptide reads, in one-letter code: Small ribosomal subunit protein bS16 (177 aa).

The segment at 80 to 177 (GIIAMPANGS…AAEAPKEEAK (98 aa)) is disordered. The segment covering 107–122 (AAPAAAPKAEAAPAAE) has biased composition (low complexity).

It belongs to the bacterial ribosomal protein bS16 family.

The protein is Small ribosomal subunit protein bS16 of Pelagibacter ubique (strain HTCC1062).